Consider the following 645-residue polypeptide: 1-deoxy-D-xylulose-5-phosphate synthase 2 (645 aa).

Residues His79 and 120 to 122 (GHS) contribute to the thiamine diphosphate site. Mg(2+) is bound at residue Asp151. Thiamine diphosphate contacts are provided by residues 152–153 (GS), Asn180, Tyr291, and Glu373. Asn180 contributes to the Mg(2+) binding site.

This sequence belongs to the transketolase family. DXPS subfamily. As to quaternary structure, homodimer. Requires Mg(2+) as cofactor. Thiamine diphosphate is required as a cofactor.

The enzyme catalyses D-glyceraldehyde 3-phosphate + pyruvate + H(+) = 1-deoxy-D-xylulose 5-phosphate + CO2. The protein operates within metabolic intermediate biosynthesis; 1-deoxy-D-xylulose 5-phosphate biosynthesis; 1-deoxy-D-xylulose 5-phosphate from D-glyceraldehyde 3-phosphate and pyruvate: step 1/1. In terms of biological role, catalyzes the acyloin condensation reaction between C atoms 2 and 3 of pyruvate and glyceraldehyde 3-phosphate to yield 1-deoxy-D-xylulose-5-phosphate (DXP). The polypeptide is 1-deoxy-D-xylulose-5-phosphate synthase 2 (Rhodospirillum rubrum (strain ATCC 11170 / ATH 1.1.1 / DSM 467 / LMG 4362 / NCIMB 8255 / S1)).